The chain runs to 117 residues: MADEEISKAFRDLQFKTNETRMRIVQGEQNKKVNYQKMRISESTKKNLVDLDENLKYYRSVGRMFLLTDKPAEISRHEAEAKQSKEKIEAIEKQKDYLEKGLVEAETNLRELIQSRR.

Belongs to the prefoldin subunit beta family. In terms of assembly, heterohexamer of two PFD-alpha type and four PFD-beta type subunits. As to expression, expressed in the distal cell tip of developing embryos.

Its subcellular location is the cytoplasm. Its function is as follows. Binds specifically to cytosolic chaperonin (c-CPN) and transfers target proteins to it. Binds to nascent polypeptide chain and promotes folding in an environment in which there are many competing pathways for nonnative proteins. Has a role in gonadogenesis. The chain is Probable prefoldin subunit 1 (pfd-1) from Caenorhabditis elegans.